The chain runs to 121 residues: uncharacterized protein (121 aa).

2 helical membrane passes run 26–46 (FIAL…ILVL) and 72–92 (AFLT…WLGL).

The protein localises to the membrane. This is an uncharacterized protein from Saccharomyces cerevisiae (strain ATCC 204508 / S288c) (Baker's yeast).